The sequence spans 297 residues: Probable GTP 3',8-cyclase (297 aa).

A Radical SAM core domain is found at 4–227 (RYGRQIRSFR…MQNRKKYVID (224 aa)). Residue R13 coordinates GTP. [4Fe-4S] cluster is bound by residues C20 and C24. Y26 serves as a coordination point for S-adenosyl-L-methionine. C27 contacts [4Fe-4S] cluster. Position 61 (K61) interacts with GTP. G65 is a binding site for S-adenosyl-L-methionine. T91 is a binding site for GTP. S115 contributes to the S-adenosyl-L-methionine binding site. K152 contacts GTP. Residues C243 and C246 each coordinate [4Fe-4S] cluster. 248-250 (RIR) contacts GTP. Residue C260 coordinates [4Fe-4S] cluster.

This sequence belongs to the radical SAM superfamily. MoaA family. It depends on [4Fe-4S] cluster as a cofactor.

The catalysed reaction is GTP + AH2 + S-adenosyl-L-methionine = (8S)-3',8-cyclo-7,8-dihydroguanosine 5'-triphosphate + 5'-deoxyadenosine + L-methionine + A + H(+). Its pathway is cofactor biosynthesis; molybdopterin biosynthesis. Its function is as follows. Catalyzes the cyclization of GTP to (8S)-3',8-cyclo-7,8-dihydroguanosine 5'-triphosphate. This Methanococcus maripaludis (strain DSM 14266 / JCM 13030 / NBRC 101832 / S2 / LL) protein is Probable GTP 3',8-cyclase.